Consider the following 472-residue polypeptide: MELIIILLALGLLMFTAYRGFSVILFAPICALFAVLLTDPSHVLPFFSSIFMEKMAGFIKLYFPVFLLGAIFGKVVEMAGLAASIAKTIVRLVGAKRAILAIVLMGAVLTYSGVSLFVVVFAVYPFAKNMFQEANIPKRLIPGTIALGAFTFTMDALPGTPQIQNVIPTSFFKTDIYAAPWLGLMGAVIVLAAGMLYLESRRKKAQASGEGYGGFDSQNAPAPESIESAAEPDKSPIRHALAFVPLILVGAVNKYFTIYLPKWYPNGFDFSSIGLKEFGRLDISSAAAIWSVEIALVIGIITTILFDWRSVFAQLKEGLNEGIGGALLASMNTGAEYGFGGIIAALPGFHKLSSGISHTFTDPLVNGAVTTTALAGITGSASGGMGIALSAMSEQYLQAIQAYNIPPEVMHRVISMASGGMDTLPHNGAVITLLAVTGLTHRQSYRDIFAITLIKTAAVFAVIAIYSLTGLV.

6 consecutive transmembrane segments (helical) span residues 4-24 (IIIL…FSVI), 27-47 (APIC…LPFF), 56-76 (AGFI…GKVV), 99-119 (ILAI…LFVV), 140-160 (LIPG…LPGT), and 176-196 (IYAA…AGML). A disordered region spans residues 209–229 (GEGYGGFDSQNAPAPESIESA). The segment covering 220–229 (APAPESIESA) has biased composition (low complexity). 5 helical membrane passes run 240 to 260 (ALAF…TIYL), 286 to 306 (AAAI…TILF), 323 to 343 (IGGA…GGII), 372 to 392 (TALA…LSAM), and 448 to 468 (IFAI…IYSL).

The protein belongs to the CitM (TC 2.A.11) transporter family.

The protein localises to the cell membrane. This is an uncharacterized protein from Bacillus subtilis (strain 168).